The chain runs to 83 residues: High-potential iron-sulfur protein (83 aa).

The [4Fe-4S] cluster site is built by cysteine 43, cysteine 46, cysteine 61, and cysteine 75.

It belongs to the high-potential iron-sulfur protein (HiPIP) family. As to quaternary structure, homodimer.

It localises to the periplasm. In terms of biological role, specific class of high-redox-potential 4Fe-4S ferredoxins. Functions in anaerobic electron transport in most purple and in some other photosynthetic bacteria and in at least one genus (Paracoccus) of halophilic, denitrifying bacteria. This chain is High-potential iron-sulfur protein, found in Isochromatium buderi (Chromatium buderi).